We begin with the raw amino-acid sequence, 269 residues long: Cytochrome c oxidase subunit 3 (269 aa).

7 helical membrane passes run 24-44, 46-66, 90-110, 138-160, 167-187, 207-227, and 247-267; these read LFTS…MHGF, GFQY…GLWF, GVGL…WAFF, PLLN…HSLI, ALYG…FQGV, FGTG…AVGL, and ILYW…VYYW.

It belongs to the cytochrome c oxidase subunit 3 family. Component of the cytochrome c oxidase (complex IV, CIV), a multisubunit enzyme composed of a catalytic core of 3 subunits and several supernumerary subunits. The complex exists as a monomer or a dimer and forms supercomplexes (SCs) in the inner mitochondrial membrane with ubiquinol-cytochrome c oxidoreductase (cytochrome b-c1 complex, complex III, CIII).

It localises to the mitochondrion inner membrane. It carries out the reaction 4 Fe(II)-[cytochrome c] + O2 + 8 H(+)(in) = 4 Fe(III)-[cytochrome c] + 2 H2O + 4 H(+)(out). Functionally, component of the cytochrome c oxidase, the last enzyme in the mitochondrial electron transport chain which drives oxidative phosphorylation. The respiratory chain contains 3 multisubunit complexes succinate dehydrogenase (complex II, CII), ubiquinol-cytochrome c oxidoreductase (cytochrome b-c1 complex, complex III, CIII) and cytochrome c oxidase (complex IV, CIV), that cooperate to transfer electrons derived from NADH and succinate to molecular oxygen, creating an electrochemical gradient over the inner membrane that drives transmembrane transport and the ATP synthase. Cytochrome c oxidase is the component of the respiratory chain that catalyzes the reduction of oxygen to water. Electrons originating from reduced cytochrome c in the intermembrane space (IMS) are transferred via the dinuclear copper A center (CU(A)) of subunit 2 and heme A of subunit 1 to the active site in subunit 1, a binuclear center (BNC) formed by heme A3 and copper B (CU(B)). The BNC reduces molecular oxygen to 2 water molecules using 4 electrons from cytochrome c in the IMS and 4 protons from the mitochondrial matrix. The chain is Cytochrome c oxidase subunit 3 (cox3) from Emericella nidulans (Aspergillus nidulans).